A 494-amino-acid polypeptide reads, in one-letter code: UPF0371 protein STER_1332 (494 aa).

It belongs to the UPF0371 family.

This chain is UPF0371 protein STER_1332, found in Streptococcus thermophilus (strain ATCC BAA-491 / LMD-9).